Here is a 295-residue protein sequence, read N- to C-terminus: sn-glycerol-3-phosphate transport system permease protein UgpA (295 aa).

Residues 1–11 are Cytoplasmic-facing; it reads MSSSRPVFRSR. A helical membrane pass occupies residues 12-32; the sequence is WLPYLLVAPQLVITVIFFIWP. Residues 33-80 lie on the Periplasmic side of the membrane; it reads AGEALWYSLQSVDPFGFSSQFVGLENFVALFHDSYYLDAFWTTIKFSA. An ABC transmembrane type-1 domain is found at 76–284; it reads IKFSALVTFS…FLVIILTVVQ (209 aa). A helical transmembrane segment spans residues 81-101; that stretch reads LVTFSGLLVSLFFAALVDYVV. The Cytoplasmic portion of the chain corresponds to 102–109; the sequence is RGSRFYQT. Residues 110–130 form a helical membrane-spanning segment; sequence LMLLPYAVAPAVAAVLWIFLF. Residues 131–157 are Periplasmic-facing; sequence NPGRGLITHFLGEFGYDWNHAQNSGQA. Residues 158–178 form a helical membrane-spanning segment; that stretch reads MFLVVFASVWKQISYNFLFFF. Topologically, residues 179-207 are cytoplasmic; it reads AALQSIPRSLVEAAAIDGAGPIRRFFRLS. A helical transmembrane segment spans residues 208–228; that stretch reads LPLIAPVSFFLLVVNLVYAFF. At 229–262 the chain is on the periplasmic side; sequence DTFPVIDAATAGGPVQATTTLIYKIYCEGFTGLD. The helical transmembrane segment at 263–283 threads the bilayer; the sequence is LSASAAQSVVLMFLVIILTVV. The Cytoplasmic segment spans residues 284–295; that stretch reads QFRYVESKVRYQ.

This sequence belongs to the binding-protein-dependent transport system permease family. UgpAE subfamily. As to quaternary structure, the complex is composed of two ATP-binding proteins (UgpC), two transmembrane proteins (UgpA and UgpE) and a solute-binding protein (UgpB).

Its subcellular location is the cell inner membrane. Its function is as follows. Part of the ABC transporter complex UgpBAEC involved in sn-glycerol-3-phosphate (G3P) import. Probably responsible for the translocation of the substrate across the membrane. This Salmonella typhi protein is sn-glycerol-3-phosphate transport system permease protein UgpA (ugpA).